The following is a 359-amino-acid chain: DNA replication and repair protein RecF (359 aa).

30–37 is an ATP binding site; it reads GANGSGKT.

This sequence belongs to the RecF family.

The protein resides in the cytoplasm. In terms of biological role, the RecF protein is involved in DNA metabolism; it is required for DNA replication and normal SOS inducibility. RecF binds preferentially to single-stranded, linear DNA. It also seems to bind ATP. The chain is DNA replication and repair protein RecF from Vibrio atlanticus (strain LGP32) (Vibrio splendidus (strain Mel32)).